A 246-amino-acid polypeptide reads, in one-letter code: Cell division protein ZapD (246 aa).

Belongs to the ZapD family. In terms of assembly, interacts with FtsZ.

It is found in the cytoplasm. Functionally, cell division factor that enhances FtsZ-ring assembly. Directly interacts with FtsZ and promotes bundling of FtsZ protofilaments, with a reduction in FtsZ GTPase activity. The sequence is that of Cell division protein ZapD from Vibrio cholerae serotype O1 (strain ATCC 39541 / Classical Ogawa 395 / O395).